Reading from the N-terminus, the 197-residue chain is UPF0228 protein MA_3125 (197 aa).

The protein belongs to the UPF0228 family.

In Methanosarcina acetivorans (strain ATCC 35395 / DSM 2834 / JCM 12185 / C2A), this protein is UPF0228 protein MA_3125.